An 802-amino-acid chain; its full sequence is Receptor-type tyrosine-protein phosphatase alpha (802 aa).

The N-terminal stretch at 1-19 (MDSWFILVLLGSGLICVSA) is a signal peptide. At 20–151 (NNATTVAPSV…DSKDRRDETP (132 aa)) the chain is on the extracellular side. 2 N-linked (GlcNAc...) asparagine glycosylation sites follow: asparagine 21 and asparagine 36. The interval 39–59 (TAEPVKEEAKTSNPTSSLTSL) is disordered. N-linked (GlcNAc...) asparagine glycosylation is found at asparagine 68, asparagine 80, asparagine 86, asparagine 104, and asparagine 124. Composition is skewed to polar residues over residues 79 to 115 (VNSS…QFTD) and 123 to 141 (GNSS…SGNS). Residues 79-146 (VNSSDSDNGT…PSGNSDSKDR (68 aa)) are disordered. The helical transmembrane segment at 152 to 174 (IIAVMVALSSLLVIVFIIIVLYM) threads the bilayer. Residues 175–802 (LRFKKYKQAG…DAFSDYANFK (628 aa)) lie on the Cytoplasmic side of the membrane. Phosphoserine occurs at positions 211 and 213. Tyrosine-protein phosphatase domains are found at residues 241–501 (FREE…LLEH) and 533–791 (LEEE…VQEY). Substrate-binding positions include aspartate 410, 442–448 (CSAGVGR), and glutamine 486. Cysteine 442 (phosphocysteine intermediate) is an active-site residue. Cysteine 732 serves as the catalytic Phosphocysteine intermediate. Tyrosine 798 bears the Phosphotyrosine mark.

Belongs to the protein-tyrosine phosphatase family. Receptor class 4 subfamily. As to quaternary structure, part of a complex comprised of PTPRA, BCAR1, BCAR3 (via SH2 domain), and SRC. Within the complex, interacts (when phosphorylated on Tyr-798) with BCAR3 (via SH2 domain). Interacts with GRB2. Integrin binding to extracellular matrix induces phosphorylation at Tyr-798 which induces PTPRA localization and recruitment of BCAR3, BCAR1 and CRK to focal adhesions.

The protein localises to the cell membrane. It is found in the cell junction. Its subcellular location is the focal adhesion. The enzyme catalyses O-phospho-L-tyrosyl-[protein] + H2O = L-tyrosyl-[protein] + phosphate. Functionally, tyrosine protein phosphatase which is involved in integrin-mediated focal adhesion formation. Following integrin engagement, specifically recruits BCAR3, BCAR1 and CRK to focal adhesions thereby promoting SRC-mediated phosphorylation of BRAC1 and the subsequent activation of PAK and small GTPase RAC1 and CDC42. The sequence is that of Receptor-type tyrosine-protein phosphatase alpha (PTPRA) from Homo sapiens (Human).